A 487-amino-acid chain; its full sequence is MVNTQNQISQTSELDYIVNQPYKYGFKTSVESEQFPRGISEDIVRLISKKKDEPEYLLNFRLKAYKKWKKMSSPSWAHIKHPNIDFNTIIYYAVPKLKKELKSLDEVDPEILDTFNKLGISLNEQKRISNVAVDAVFDSVSIATTFKKELSEAGVIFCSISEAIRDYPELIKKYLGTVVPAGDNYFAALNSAVFSDGSFCYIPPNTVCPLELSTYFRINNEESGQFERTLIIADRGSKVSYLEGCTAPQFDTNQLHAAIVELVALEGAEIKYSTVQNWYAGNKEGKGGIYNFVTKRGLCSGNNSKISWTQVETGSAITWKYPSCILAGENSQGEFYSVALTNNYQEADTGTKMIHIGNNTKSRIISKGISAGRSKNSYRGLVKVGPQSFNSRNYSQCDSLLIGQSSQANTFPYIQVQNPTSKVEHEASTSKISEDQIFYFLQRGINLEESIALMISGFCKDVFNELPMEFATEADRLLSLKLEGTVG.

The protein belongs to the iron-sulfur cluster assembly SufBD family.

The protein localises to the plastid. It is found in the chloroplast. In Pyropia yezoensis (Susabi-nori), this protein is Iron-sulfur cluster assembly SufBD family protein ycf24 (ycf24).